The sequence spans 554 residues: Perforin-1 (554 aa).

An N-terminal signal peptide occupies residues 1-20 (MATCLFLLGLFLLLPRPVPA). Intrachain disulfides connect Cys-22–Cys-75, Cys-30–Cys-72, and Cys-101–Cys-175. In terms of domain architecture, MACPF spans 26-374 (TRSECKQKHK…HYIMSRARWQ (349 aa)). Residues 128-148 (WRVGLDVNPRPEANMRASVAG) form a beta stranded membrane-spanning segment. Asn-204 is a glycosylation site (N-linked (GlcNAc...) asparagine). Cystine bridges form between Cys-241–Cys-407, Cys-376–Cys-392, Cys-380–Cys-394, and Cys-396–Cys-406. The chain crosses the membrane as a beta stranded span at residues 256-278 (CLNVEAQVSIGAQASVSSEYKAC). Residue Asn-375 is glycosylated (N-linked (GlcNAc...) asparagine). The EGF-like domain maps to 375-407 (NCSRPCRSGQHKSSHDSCQCECQDSKVTNQDCC). The C2 domain maps to 395-513 (ECQDSKVTNQ…FHEVTCELNH (119 aa)). Residues Gly-428, Asp-429, Thr-432, Ala-433, Asp-435, Asn-454, Glu-467, Asp-483, Ala-484, Asp-485, Trp-488, Asp-489, Asp-490, and Asp-491 each contribute to the Ca(2+) site. 2 disulfide bridges follow: Cys-496/Cys-509 and Cys-524/Cys-533. An N-linked (GlcNAc...) asparagine glycan is attached at Asn-548.

It belongs to the complement C6/C7/C8/C9 family. In terms of assembly, monomer, as soluble protein. Homooligomer; homooligomerizes to form a pore-forming ring. Requires Ca(2+) as cofactor. In terms of processing, N-glycosylated. The glycosylation sites are facing the interior of the pore. As to expression, detected in cytotoxic T-lymphocytes and natural killer cells.

Its subcellular location is the cytolytic granule. It localises to the secreted. The protein localises to the cell membrane. It is found in the endosome lumen. In terms of biological role, pore-forming protein that plays a key role in granzyme-mediated programmed cell death, and in defense against virus-infected or neoplastic cells. Can insert into the membrane of target cells in its calcium-bound form, oligomerize and form large pores. Promotes cytolysis and apoptosis of target cells by mediating the passage and uptake of cytotoxic granzymes. Facilitates the delivery of cationic cargo protein, while anionic or neural proteins are not delivered efficiently. Perforin pores allow the release of mature caspase-7 (CASP7) into the extracellular milieu. The chain is Perforin-1 (Prf1) from Mus musculus (Mouse).